A 201-amino-acid chain; its full sequence is Recombination protein RecR (201 aa).

A C4-type zinc finger spans residues 60-75 (CSCCGNVDTIDPCTVC). The region spanning 83 to 178 (AVIIVVEDVA…RITRLAHGVP (96 aa)) is the Toprim domain.

Belongs to the RecR family.

May play a role in DNA repair. It seems to be involved in an RecBC-independent recombinational process of DNA repair. It may act with RecF and RecO. The protein is Recombination protein RecR of Sinorhizobium medicae (strain WSM419) (Ensifer medicae).